We begin with the raw amino-acid sequence, 237 residues long: Phosphoribosylaminoimidazole-succinocarboxamide synthase (237 aa).

This sequence belongs to the SAICAR synthetase family.

It catalyses the reaction 5-amino-1-(5-phospho-D-ribosyl)imidazole-4-carboxylate + L-aspartate + ATP = (2S)-2-[5-amino-1-(5-phospho-beta-D-ribosyl)imidazole-4-carboxamido]succinate + ADP + phosphate + 2 H(+). It participates in purine metabolism; IMP biosynthesis via de novo pathway; 5-amino-1-(5-phospho-D-ribosyl)imidazole-4-carboxamide from 5-amino-1-(5-phospho-D-ribosyl)imidazole-4-carboxylate: step 1/2. The polypeptide is Phosphoribosylaminoimidazole-succinocarboxamide synthase (Edwardsiella ictaluri (strain 93-146)).